The primary structure comprises 341 residues: Phosphoribosylformylglycinamidine cyclo-ligase (341 aa).

The protein belongs to the AIR synthase family.

The protein resides in the cytoplasm. The enzyme catalyses 2-formamido-N(1)-(5-O-phospho-beta-D-ribosyl)acetamidine + ATP = 5-amino-1-(5-phospho-beta-D-ribosyl)imidazole + ADP + phosphate + H(+). It functions in the pathway purine metabolism; IMP biosynthesis via de novo pathway; 5-amino-1-(5-phospho-D-ribosyl)imidazole from N(2)-formyl-N(1)-(5-phospho-D-ribosyl)glycinamide: step 2/2. The polypeptide is Phosphoribosylformylglycinamidine cyclo-ligase (Thermosynechococcus vestitus (strain NIES-2133 / IAM M-273 / BP-1)).